We begin with the raw amino-acid sequence, 73 residues long: Putative membrane protein insertion efficiency factor (73 aa).

It belongs to the UPF0161 family.

It localises to the cell inner membrane. In terms of biological role, could be involved in insertion of integral membrane proteins into the membrane. This Parabacteroides distasonis (strain ATCC 8503 / DSM 20701 / CIP 104284 / JCM 5825 / NCTC 11152) protein is Putative membrane protein insertion efficiency factor.